The chain runs to 1669 residues: Collagen alpha-1(IV) chain (1669 aa).

An N-terminal signal peptide occupies residues 1–27; sequence MGPRLGVWLLLLLAALLLHEESSRAAA. The propeptide at 28 to 172 is N-terminal propeptide (7S domain); the sequence is KGGCAGSGCG…LGHIPGTLLK (145 aa). The tract at residues 50-1445 is disordered; it reads ERGLPGLQGV…PPGTPSVDHG (1396 aa). The segment at 173 to 1440 is triple-helical region; sequence GERGYPGQPG…PGSMGPPGTP (1268 aa). Residues 196–214 show a composition bias toward pro residues; the sequence is VGPPGFTGPPGPPGPPGPP. 3-hydroxyproline is present on residues Pro-204, Pro-207, and Pro-210. 2 stretches are compositionally biased toward basic and acidic residues: residues 254 to 263 and 289 to 298; these read TAMRGEKGQK and PGKDGEKGEK. Over residues 347 to 356 the composition is skewed to gly residues; sequence GYPGGPGAKG. The segment covering 357-366 has biased composition (low complexity); that stretch reads ETGPKGFPGI. The segment covering 367–376 has biased composition (pro residues); sequence PGQPGPPGFP. Positions 396-412 are enriched in low complexity; the sequence is PGLPGVSLPGPSGRDGL. 2 stretches are compositionally biased toward pro residues: residues 413–424 and 436–448; these read PGPPGPPGPPGQ and PGPPGDQGPPGIP. A compositionally biased stretch (low complexity) spans 485-494; the sequence is PGEIGFPGQP. Composition is skewed to basic and acidic residues over residues 497–508 and 535–545; these read KGDRGLPGRDGL and FDIRLKGDKGD. Over residues 586–595 the composition is skewed to gly residues; the sequence is GPPGGVGFPG. 3-hydroxyproline occurs at positions 587 and 602. At Pro-603 the chain carries 4-hydroxyproline. At Pro-605 the chain carries 3-hydroxyproline. 5 positions are modified to 4-hydroxyproline: Pro-606, Pro-623, Pro-626, Pro-629, and Pro-632. A 3-hydroxyproline modification is found at Pro-647. Composition is skewed to gly residues over residues 758 to 767 and 797 to 817; these read GNVGGPGIPG and GVPGIGPPGAMGPPGGQGPPG. Residues 847-871 are compositionally biased toward low complexity; the sequence is SQGLPGLTGQSGLPGLPGQQGTPGQ. The segment covering 937–955 has biased composition (basic and acidic residues); it reads SMDKVDMGSMKGEKGDQGE. A compositionally biased stretch (gly residues) spans 1011–1020; that stretch reads GSAGGMGLPG. 3 stretches are compositionally biased toward low complexity: residues 1030–1040, 1101–1114, and 1193–1212; these read IPGPQGIPGLP, SPGSVGYPGSPGLP, and FPGLSGSPGIPGSKGEQGFM. Residue Pro-1214 is modified to 3-hydroxyproline. Pro residues predominate over residues 1247–1258; that stretch reads PGRPGPMGPPGL. Positions 1290 to 1299 are enriched in gly residues; that stretch reads GMPGIGGSPG. Residues 1413–1428 show a composition bias toward pro residues; sequence FGPPGPRGFPGPPGPD. Residue Pro-1424 is modified to 3-hydroxyproline. Positions 1445 to 1669 constitute a Collagen IV NC1 domain; it reads GFLVTRHSQT…SRCQVCMRRT (225 aa). Cystine bridges form between Cys-1460–Cys-1551, Cys-1493–Cys-1548, Cys-1505–Cys-1511, Cys-1570–Cys-1665, Cys-1604–Cys-1662, and Cys-1616–Cys-1622. Residue Met-1533 forms an S-Lysyl-methionine sulfilimine (Met-Lys) (interchain with K-1651) linkage. Lys-1651 is covalently cross-linked (S-Lysyl-methionine sulfilimine (Lys-Met) (interchain with M-1533)).

It belongs to the type IV collagen family. In terms of assembly, there are six type IV collagen isoforms, alpha 1(IV)-alpha 6(IV), each of which can form a triple helix structure with 2 other chains to generate type IV collagen network. Interacts with EFEMP2. Post-translationally, lysines at the third position of the tripeptide repeating unit (G-X-Y) are hydroxylated in all cases. The modified lysines can be O-glycosylated. Contains 4-hydroxyproline. Prolines at the third position of the tripeptide repeating unit (G-X-Y) are hydroxylated in some or all of the chains. In terms of processing, contains 3-hydroxyproline. This modification occurs on the first proline residue in the sequence motif Gly-Pro-Hyp, where Hyp is 4-hydroxyproline. Post-translationally, type IV collagens contain numerous cysteine residues which are involved in inter- and intramolecular disulfide bonding. 12 of these, located in the NC1 domain, are conserved in all known type IV collagens. The trimeric structure of the NC1 domains is stabilized by covalent bonds (sulfilimine cross-links) between Lys and Met residues. These cross-links are important for the mechanical stability of the basement membrane. Sulfilimine cross-link is catalyzed by PXDN. In terms of processing, proteolytic processing produces the C-terminal NC1 peptide, arresten.

The protein resides in the secreted. It is found in the extracellular space. The protein localises to the extracellular matrix. It localises to the basement membrane. Functionally, type IV collagen is the major structural component of glomerular basement membranes (GBM), forming a 'chicken-wire' meshwork together with laminins, proteoglycans and entactin/nidogen. Its function is as follows. Arresten, comprising the C-terminal NC1 domain, inhibits angiogenesis and tumor formation. The C-terminal half is found to possess the anti-angiogenic activity. Specifically inhibits endothelial cell proliferation, migration and tube formation. The polypeptide is Collagen alpha-1(IV) chain (Bos taurus (Bovine)).